A 557-amino-acid chain; its full sequence is Formate--tetrahydrofolate ligase 2 (557 aa).

66 to 73 provides a ligand contact to ATP; it reads TPAGEGKT.

It belongs to the formate--tetrahydrofolate ligase family.

The catalysed reaction is (6S)-5,6,7,8-tetrahydrofolate + formate + ATP = (6R)-10-formyltetrahydrofolate + ADP + phosphate. The protein operates within one-carbon metabolism; tetrahydrofolate interconversion. The sequence is that of Formate--tetrahydrofolate ligase 2 from Streptococcus pyogenes serotype M18 (strain MGAS8232).